A 141-amino-acid polypeptide reads, in one-letter code: Flagellar assembly factor FliW (141 aa).

Belongs to the FliW family. In terms of assembly, interacts with translational regulator CsrA and flagellin(s).

Its subcellular location is the cytoplasm. Functionally, acts as an anti-CsrA protein, binds CsrA and prevents it from repressing translation of its target genes, one of which is flagellin. Binds to flagellin and participates in the assembly of the flagellum. The polypeptide is Flagellar assembly factor FliW (Clostridium beijerinckii (strain ATCC 51743 / NCIMB 8052) (Clostridium acetobutylicum)).